The chain runs to 312 residues: tRNA-dihydrouridine(16) synthase (312 aa).

Residues 7-9 and glutamine 68 contribute to the FMN site; that span reads PME. Cysteine 98 serves as the catalytic Proton donor. Residues lysine 139, 200–202, and 224–225 contribute to the FMN site; these read NGE and GR.

This sequence belongs to the Dus family. DusC subfamily. FMN serves as cofactor.

It carries out the reaction 5,6-dihydrouridine(16) in tRNA + NADP(+) = uridine(16) in tRNA + NADPH + H(+). The enzyme catalyses 5,6-dihydrouridine(16) in tRNA + NAD(+) = uridine(16) in tRNA + NADH + H(+). In terms of biological role, catalyzes the synthesis of 5,6-dihydrouridine (D), a modified base found in the D-loop of most tRNAs, via the reduction of the C5-C6 double bond in target uridines. Specifically modifies U16 in tRNAs. In Yersinia pestis, this protein is tRNA-dihydrouridine(16) synthase.